The primary structure comprises 154 residues: Myoglobin (154 aa).

A Globin domain is found at 2–148 (GLSDGEWQLV…FRNDIAAKYK (147 aa)). Position 4 is a phosphoserine (Ser4). His65 is a binding site for nitrite. O2 is bound at residue His65. Position 68 is a phosphothreonine (Thr68). His94 contributes to the heme b binding site.

The protein belongs to the globin family. In terms of assembly, monomeric.

It is found in the cytoplasm. The protein resides in the sarcoplasm. It carries out the reaction Fe(III)-heme b-[protein] + nitric oxide + H2O = Fe(II)-heme b-[protein] + nitrite + 2 H(+). It catalyses the reaction H2O2 + AH2 = A + 2 H2O. Functionally, monomeric heme protein which primary function is to store oxygen and facilitate its diffusion within muscle tissues. Reversibly binds oxygen through a pentacoordinated heme iron and enables its timely and efficient release as needed during periods of heightened demand. Depending on the oxidative conditions of tissues and cells, and in addition to its ability to bind oxygen, it also has a nitrite reductase activity whereby it regulates the production of bioactive nitric oxide. Under stress conditions, like hypoxia and anoxia, it also protects cells against reactive oxygen species thanks to its pseudoperoxidase activity. The protein is Myoglobin (MB) of Otolemur crassicaudatus (Brown greater galago).